The following is a 545-amino-acid chain: Membrane protein insertase YidC (545 aa).

6 helical membrane passes run 10–30 (AIYLSLFFIGIFMIIDDIFFS), 319–339 (LLYFIQVPMQLIMQIFYNVIP), 341–361 (WGLSIMFLTIVVRILIFPLTF), 407–427 (LGGCFPILLQLPVFFALYGLV), 467–487 (ILPFIMMVTQLISTIISSNVS), and 502–522 (MPIMFFFILYDMPSGLLIYWI).

This sequence belongs to the OXA1/ALB3/YidC family. Type 1 subfamily. As to quaternary structure, interacts with the Sec translocase complex via SecD. Specifically interacts with transmembrane segments of nascent integral membrane proteins during membrane integration.

The protein resides in the cell inner membrane. Required for the insertion and/or proper folding and/or complex formation of integral membrane proteins into the membrane. Involved in integration of membrane proteins that insert both dependently and independently of the Sec translocase complex, as well as at least some lipoproteins. Aids folding of multispanning membrane proteins. This chain is Membrane protein insertase YidC, found in Borrelia hermsii (strain HS1 / DAH).